We begin with the raw amino-acid sequence, 27 residues long: Protein YqiM (27 aa).

The chain is Protein YqiM from Escherichia coli (strain K12).